Reading from the N-terminus, the 78-residue chain is Large ribosomal subunit protein bL28 (78 aa).

The interval 1-30 (MAAHCQVTGAGPGFGHSISHSHRRTKRRFD) is disordered.

This sequence belongs to the bacterial ribosomal protein bL28 family.

This chain is Large ribosomal subunit protein bL28, found in Micrococcus luteus (strain ATCC 4698 / DSM 20030 / JCM 1464 / CCM 169 / CCUG 5858 / IAM 1056 / NBRC 3333 / NCIMB 9278 / NCTC 2665 / VKM Ac-2230) (Micrococcus lysodeikticus).